We begin with the raw amino-acid sequence, 240 residues long: MAGHSKWKNIQRRKNAQDAKRGKIFMKLAKEIYVAAKEGGPDPESNASLRLVIDKAKNANMPNDNIDRAIKKASGSQDGKSYEEITYEGYGPSGVAVMVKCLTDNKNRTATSVRTAFSKNGGSLGETGCVSYMFDRKGYIAIEREDLEIDEEEFMLEVIDAGAEELETSEELFEIYTEPEQFEEVKKSLEERGYKLATSEITMVPQTYAEVDEALQEKVEKLIDVLEDDDDVQEVYTNVH.

Residues 1–14 (MAGHSKWKNIQRRK) show a composition bias toward basic residues. A disordered region spans residues 1–21 (MAGHSKWKNIQRRKNAQDAKR).

This sequence belongs to the TACO1 family.

It is found in the cytoplasm. The polypeptide is Probable transcriptional regulatory protein BLi02909/BL01150 (Bacillus licheniformis (strain ATCC 14580 / DSM 13 / JCM 2505 / CCUG 7422 / NBRC 12200 / NCIMB 9375 / NCTC 10341 / NRRL NRS-1264 / Gibson 46)).